The primary structure comprises 130 residues: Iron-sulfur cluster insertion protein ErpA (130 aa).

Positions 46, 116, and 118 each coordinate iron-sulfur cluster.

The protein belongs to the HesB/IscA family. As to quaternary structure, homodimer. Requires iron-sulfur cluster as cofactor.

Its function is as follows. Required for insertion of 4Fe-4S clusters for at least IspG. The sequence is that of Iron-sulfur cluster insertion protein ErpA from Legionella pneumophila subsp. pneumophila (strain Philadelphia 1 / ATCC 33152 / DSM 7513).